A 248-amino-acid chain; its full sequence is Probable transcriptional regulatory protein Smed_2641 (248 aa).

The protein belongs to the TACO1 family.

It localises to the cytoplasm. The sequence is that of Probable transcriptional regulatory protein Smed_2641 from Sinorhizobium medicae (strain WSM419) (Ensifer medicae).